We begin with the raw amino-acid sequence, 190 residues long: Putative resolvase R771 (190 aa).

The H-T-H motif DNA-binding region spans 11-30; sequence SSVLGVHQRTLYQWDKKGWI. The 130-residue stretch at 61 to 190 folds into the Resolvase/invertase-type recombinase catalytic domain; sequence LSICYVRVSS…RNGLKKYSNK (130 aa). Residues 66–92 are a coiled coil; sequence VRVSSNNQKDDLERQIKFMKKKYPNHT. Ser-69 functions as the O-(5'-phospho-DNA)-serine intermediate in the catalytic mechanism.

This sequence belongs to the site-specific recombinase resolvase family.

In terms of biological role, resolvase catalyzes the resolution (a site-specific recombination) of the cointegrated replicon to yield the final transposition products. This is Putative resolvase R771 from Acanthamoeba polyphaga (Amoeba).